Consider the following 223-residue polypeptide: MASATVRNVPLLDDDTIPFGEEDEMRDPSRAGQKYTHPYVTFFHLFFRGAAILIYMFCGWFSDSFITSFVFVVLFLSADFWTVKNISGRLLVGLRWWNYVDDDGVSHWVFESKNSESYQSRVNKNEQRIFWLGLILCPVFWGLFFLFALFGLKFKWLLLVMIAIALNAANLYGYVKCNYGANKDLNSAATDFVKTQFFKNAVDIMTRPSGAPPPTNVRPTGVV.

The tract at residues 1-30 (MASATVRNVPLLDDDTIPFGEEDEMRDPSR) is disordered. Residues 12-25 (LDDDTIPFGEEDEM) show a composition bias toward acidic residues. Transmembrane regions (helical) follow at residues 35 to 55 (YTHPYVTFFHLFFRGAAILIY), 56 to 76 (MFCGWFSDSFITSFVFVVLFL), 129 to 149 (IFWLGLILCPVFWGLFFLFAL), and 154 to 174 (FKWLLLVMIAIALNAANLYGY).

Belongs to the TVP23 family.

Its subcellular location is the membrane. This is an uncharacterized protein from Drosophila melanogaster (Fruit fly).